The chain runs to 100 residues: Large ribosomal subunit protein uL23 (100 aa).

This sequence belongs to the universal ribosomal protein uL23 family. In terms of assembly, part of the 50S ribosomal subunit. Contacts protein L29, and trigger factor when it is bound to the ribosome.

One of the early assembly proteins it binds 23S rRNA. One of the proteins that surrounds the polypeptide exit tunnel on the outside of the ribosome. Forms the main docking site for trigger factor binding to the ribosome. This is Large ribosomal subunit protein uL23 from Dechloromonas aromatica (strain RCB).